A 126-amino-acid chain; its full sequence is Glycine cleavage system H protein (126 aa).

The 83-residue stretch at 22–104 (VAYVGITDYA…YGKGWLIKIS (83 aa)) folds into the Lipoyl-binding domain. An N6-lipoyllysine modification is found at lysine 63.

It belongs to the GcvH family. As to quaternary structure, the glycine cleavage system is composed of four proteins: P, T, L and H. (R)-lipoate serves as cofactor.

Its function is as follows. The glycine cleavage system catalyzes the degradation of glycine. The H protein shuttles the methylamine group of glycine from the P protein to the T protein. This is Glycine cleavage system H protein from Parabacteroides distasonis (strain ATCC 8503 / DSM 20701 / CIP 104284 / JCM 5825 / NCTC 11152).